Consider the following 287-residue polypeptide: 4-diphosphocytidyl-2-C-methyl-D-erythritol kinase (287 aa).

The active site involves Lys10. Pro94–Ala104 serves as a coordination point for ATP. Residue Asp136 is part of the active site.

Belongs to the GHMP kinase family. IspE subfamily.

It catalyses the reaction 4-CDP-2-C-methyl-D-erythritol + ATP = 4-CDP-2-C-methyl-D-erythritol 2-phosphate + ADP + H(+). It participates in isoprenoid biosynthesis; isopentenyl diphosphate biosynthesis via DXP pathway; isopentenyl diphosphate from 1-deoxy-D-xylulose 5-phosphate: step 3/6. Functionally, catalyzes the phosphorylation of the position 2 hydroxy group of 4-diphosphocytidyl-2C-methyl-D-erythritol. This chain is 4-diphosphocytidyl-2-C-methyl-D-erythritol kinase, found in Pelotomaculum thermopropionicum (strain DSM 13744 / JCM 10971 / SI).